Consider the following 208-residue polypeptide: Imidazole glycerol phosphate synthase subunit HisH (208 aa).

The region spanning 2–208 is the Glutamine amidotransferase type-1 domain; it reads NVTIVDYNSG…LKIIENFLNL (207 aa). Residue Cys-85 is the Nucleophile of the active site. Active-site residues include His-190 and Glu-192.

As to quaternary structure, heterodimer of HisH and HisF.

Its subcellular location is the cytoplasm. The enzyme catalyses 5-[(5-phospho-1-deoxy-D-ribulos-1-ylimino)methylamino]-1-(5-phospho-beta-D-ribosyl)imidazole-4-carboxamide + L-glutamine = D-erythro-1-(imidazol-4-yl)glycerol 3-phosphate + 5-amino-1-(5-phospho-beta-D-ribosyl)imidazole-4-carboxamide + L-glutamate + H(+). It catalyses the reaction L-glutamine + H2O = L-glutamate + NH4(+). It functions in the pathway amino-acid biosynthesis; L-histidine biosynthesis; L-histidine from 5-phospho-alpha-D-ribose 1-diphosphate: step 5/9. Its function is as follows. IGPS catalyzes the conversion of PRFAR and glutamine to IGP, AICAR and glutamate. The HisH subunit catalyzes the hydrolysis of glutamine to glutamate and ammonia as part of the synthesis of IGP and AICAR. The resulting ammonia molecule is channeled to the active site of HisF. In Pelagibacter ubique (strain HTCC1062), this protein is Imidazole glycerol phosphate synthase subunit HisH.